We begin with the raw amino-acid sequence, 321 residues long: o-succinylbenzoate synthase (321 aa).

Lys-110 functions as the Proton donor in the catalytic mechanism. Residues Asp-138, Glu-165, and Asp-188 each coordinate Mg(2+). Residue Lys-212 is the Proton acceptor of the active site.

It belongs to the mandelate racemase/muconate lactonizing enzyme family. MenC type 1 subfamily. A divalent metal cation is required as a cofactor.

It carries out the reaction (1R,6R)-6-hydroxy-2-succinyl-cyclohexa-2,4-diene-1-carboxylate = 2-succinylbenzoate + H2O. The protein operates within quinol/quinone metabolism; 1,4-dihydroxy-2-naphthoate biosynthesis; 1,4-dihydroxy-2-naphthoate from chorismate: step 4/7. It functions in the pathway quinol/quinone metabolism; menaquinone biosynthesis. In terms of biological role, converts 2-succinyl-6-hydroxy-2,4-cyclohexadiene-1-carboxylate (SHCHC) to 2-succinylbenzoate (OSB). In Mycolicibacterium smegmatis (strain ATCC 700084 / mc(2)155) (Mycobacterium smegmatis), this protein is o-succinylbenzoate synthase.